Here is a 320-residue protein sequence, read N- to C-terminus: Methenyltetrahydromethanopterin cyclohydrolase (320 aa).

This sequence belongs to the MCH family.

It is found in the cytoplasm. The enzyme catalyses 5,10-methenyl-5,6,7,8-tetrahydromethanopterin + H2O = N(5)-formyl-5,6,7,8-tetrahydromethanopterin + H(+). It functions in the pathway one-carbon metabolism; methanogenesis from CO(2); 5,10-methenyl-5,6,7,8-tetrahydromethanopterin from CO(2): step 3/3. Catalyzes the reversible interconversion of 5-formyl-H(4)MPT to methenyl-H(4)MPT(+). The polypeptide is Methenyltetrahydromethanopterin cyclohydrolase (mch) (Methanothermobacter thermautotrophicus (strain ATCC 29096 / DSM 1053 / JCM 10044 / NBRC 100330 / Delta H) (Methanobacterium thermoautotrophicum)).